Reading from the N-terminus, the 179-residue chain is Replication restart protein DnaT (179 aa).

The disordered stretch occupies residues 155-179 (NGGLPKRDVNTVSEPDSQIPPGFRG).

Belongs to the DnaT family. Homooligomerizes. Interacts with PriB. Component of the replication restart primosome. Primosome assembly occurs via a 'hand-off' mechanism. PriA binds to replication forks, subsequently PriB then DnaT bind; DnaT then displaces ssDNA to generate the helicase loading substrate.

Involved in the restart of stalled replication forks, which reloads the replicative helicase on sites other than the origin of replication. Can function in multiple replication restart pathways. Displaces ssDNA from a PriB-ssDNA complex. Probably forms a spiral filament on ssDNA. The polypeptide is Replication restart protein DnaT (Escherichia coli O8 (strain IAI1)).